Here is an 883-residue protein sequence, read N- to C-terminus: Mitogen-activated protein kinase kinase kinase YODA (883 aa).

Disordered regions lie at residues 28–193, 303–364, and 376–396; these read GFAS…AEMF, CSPE…PPLL, and SAATSPSVPRSPARAEATVSP. The span at 57-72 shows a compositional bias: low complexity; the sequence is SRLPSRSPSPSTRVSR. Residues 94-105 are compositionally biased toward polar residues; the sequence is VTSTDSGMNGSQ. The segment covering 143–165 has biased composition (low complexity); sequence SVSSGSSVGDIPSDSLLSPLASD. 2 stretches are compositionally biased toward polar residues: residues 167–189 and 314–328; these read ENGNRTPVNISSRDQSMHSNKNS and RMTSPGPSSRIQSGA. The Protein kinase domain maps to 400 to 656; sequence WKKGRLLGMG…AAQLLDHAFV (257 aa). ATP-binding positions include 406–414 and lysine 429; that span reads LGMGSFGHV. Aspartate 525 serves as the catalytic Proton acceptor. Disordered stretches follow at residues 712-773 and 787-838; these read GSGF…GAIP and EGIG…IQPG. Residues 733 to 756 show a composition bias toward low complexity; sequence SPIFHSHSPHISGRRSPSPISSPH.

The protein belongs to the protein kinase superfamily. STE Ser/Thr protein kinase family. MAP kinase kinase kinase subfamily. As to quaternary structure, interacts with ASK7. Interacts with BSK12/SSP. Binds to BASL and MPK6. Expressed in roots, leaves, guard cells, stems, flowers and siliques.

It is found in the cytoplasm. The protein localises to the cell cortex. Its subcellular location is the cell membrane. The catalysed reaction is L-seryl-[protein] + ATP = O-phospho-L-seryl-[protein] + ADP + H(+). It catalyses the reaction L-threonyl-[protein] + ATP = O-phospho-L-threonyl-[protein] + ADP + H(+). Its activity is regulated as follows. Contains an N-terminal autoinhibitory domain. In terms of biological role, functions in a MAP kinase cascade that acts as a molecular switch to regulate the first cell fate decisions in the zygote and the early embryo. Promotes elongation of the zygote and development of its basal daughter cell into the extra-embryonic suspensor. In stomatal development, acts downstream of the LRR receptor TMM, but upstream of the MKK4/MKK5-MPK3/MPK6 module to regulate stomatal cell fate before the guard mother cell (GMC) is specified. Plays a central role in both guard cell identity and pattern formation. This MAPK cascade also functions downstream of the ER receptor in regulating coordinated local cell proliferation, which shapes the morphology of plant organs. Upon brassinosteroid signaling, is inhibited by phosphorylation of its auto-inhibitory N-terminal domain by the GSK3-like kinase ASK7. The protein is Mitogen-activated protein kinase kinase kinase YODA of Arabidopsis thaliana (Mouse-ear cress).